The primary structure comprises 704 residues: Ion-translocating oxidoreductase complex subunit C (704 aa).

4Fe-4S ferredoxin-type domains lie at 368–397 (MGAP…QQLY) and 407–436 (KATA…VQYF). Residues cysteine 377, cysteine 380, cysteine 383, cysteine 387, cysteine 416, cysteine 419, cysteine 422, and cysteine 426 each contribute to the [4Fe-4S] cluster site. A disordered region spans residues 536-685 (RAKQAAHPMA…ADPRKAAVAA (150 aa)). The segment covering 556–565 (KAAVEAAIAR) has biased composition (low complexity).

The protein belongs to the 4Fe4S bacterial-type ferredoxin family. RnfC subfamily. As to quaternary structure, the complex is composed of six subunits: RsxA, RsxB, RsxC, RsxD, RsxE and RsxG. Requires [4Fe-4S] cluster as cofactor.

The protein localises to the cell inner membrane. Its function is as follows. Part of a membrane-bound complex that couples electron transfer with translocation of ions across the membrane. Required to maintain the reduced state of SoxR. The protein is Ion-translocating oxidoreductase complex subunit C of Salmonella dublin (strain CT_02021853).